Reading from the N-terminus, the 662-residue chain is UPF0313 protein CPF_1407 (662 aa).

The Radical SAM core domain maps to 296 to 567; it reads AIEEVKFSIV…AMQRALLQFK (272 aa). [4Fe-4S] cluster contacts are provided by C310, C314, and C317. Positions 596–662 are disordered; that stretch reads IRDKNSFGKG…QRSSKGKKRR (67 aa). Basic and acidic residues predominate over residues 618 to 632; sequence SRNENSGRRESEDKK. Positions 633 to 644 are enriched in basic residues; it reads RSSHSKKQRGNK.

The protein belongs to the UPF0313 family. The cofactor is [4Fe-4S] cluster.

This chain is UPF0313 protein CPF_1407, found in Clostridium perfringens (strain ATCC 13124 / DSM 756 / JCM 1290 / NCIMB 6125 / NCTC 8237 / Type A).